Here is a 186-residue protein sequence, read N- to C-terminus: uncharacterized protein (186 aa).

Positions Leu-12–Arg-184 constitute an N-acetyltransferase domain.

Belongs to the acetyltransferase family.

Its subcellular location is the cytoplasm. The protein localises to the nucleus. This is an uncharacterized protein from Schizosaccharomyces pombe (strain 972 / ATCC 24843) (Fission yeast).